Consider the following 434-residue polypeptide: Pyrichalasin H cluster regulator BC2 (434 aa).

Disordered stretches follow at residues 297–321 (GSSPSGTPESELTSPHKRATTCSPL) and 362–383 (HPGHEDHQQQQEEVKQHDRLSH). Polar residues predominate over residues 298–309 (SSPSGTPESELT). Over residues 362-380 (HPGHEDHQQQQEEVKQHDR) the composition is skewed to basic and acidic residues.

It localises to the nucleus. Transcription factor probably involved in regulation of gene cluster that mediates the biosynthesis of a tyrosine-derived cytochalasan acting as a fungal signal recognized by resistant rice plants and leads to avirulence in Pi33 resistant rice cultivars. The polypeptide is Pyrichalasin H cluster regulator BC2 (Pyricularia oryzae (strain 70-15 / ATCC MYA-4617 / FGSC 8958) (Rice blast fungus)).